The chain runs to 411 residues: Anaerobic nitric oxide reductase flavorubredoxin homolog (411 aa).

The zinc metallo-hydrolase stretch occupies residues 30 to 210; sequence LRGSSYNSYL…PFSRLVTPKI (181 aa). Fe cation contacts are provided by His-79, Glu-81, Asp-83, His-147, Asp-166, His-227, Cys-360, Cys-363, Cys-393, and Cys-396. One can recognise a Rubredoxin-like domain in the interval 355–406; the sequence is GPRMQCSVCQWIYDPAKGEPMQDVAPGTPWSEVPDNFLCPECSLGKDVFDEL.

It in the N-terminal section; belongs to the zinc metallo-hydrolase group 3 family. Homotetramer. The cofactor is Fe cation.

The protein localises to the cytoplasm. It functions in the pathway nitrogen metabolism; nitric oxide reduction. Functionally, anaerobic nitric oxide reductase; uses NADH to detoxify nitric oxide (NO), protecting several 4Fe-4S NO-sensitive enzymes. Has at least 2 reductase partners, only one of which (NorW, flavorubredoxin reductase) has been identified. NO probably binds to the di-iron center. Also able to function as an aerobic oxygen reductase. This chain is Anaerobic nitric oxide reductase flavorubredoxin homolog, found in Escherichia coli O157:H7.